A 363-amino-acid polypeptide reads, in one-letter code: Dihydroorotate dehydrogenase (quinone) (363 aa).

FMN is bound by residues 62–66 (AGYDK) and threonine 86. A substrate-binding site is contributed by lysine 66. Residue 111–115 (NRLGF) coordinates substrate. 2 residues coordinate FMN: asparagine 140 and asparagine 171. Residue asparagine 171 coordinates substrate. The Nucleophile role is filled by serine 174. Asparagine 176 lines the substrate pocket. Residues lysine 216 and serine 244 each contribute to the FMN site. 245–246 (NT) contributes to the substrate binding site. FMN is bound by residues glycine 266, glycine 295, and 316–317 (YT).

It belongs to the dihydroorotate dehydrogenase family. Type 2 subfamily. In terms of assembly, monomer. Requires FMN as cofactor.

The protein localises to the cell membrane. It catalyses the reaction (S)-dihydroorotate + a quinone = orotate + a quinol. The protein operates within pyrimidine metabolism; UMP biosynthesis via de novo pathway; orotate from (S)-dihydroorotate (quinone route): step 1/1. Catalyzes the conversion of dihydroorotate to orotate with quinone as electron acceptor. This is Dihydroorotate dehydrogenase (quinone) from Chelativorans sp. (strain BNC1).